Here is a 149-residue protein sequence, read N- to C-terminus: Gamma-glutamylaminecyclotransferase (149 aa).

7–10 (YGTL) is a substrate binding site. E82 functions as the Proton acceptor in the catalytic mechanism.

This sequence belongs to the gamma-glutamylcyclotransferase family. In terms of assembly, monomer.

It catalyses the reaction epsilon-(gamma-L-glutamyl)-L-lysine = 5-oxo-L-proline + L-lysine. In terms of biological role, contributes to degradation of proteins cross-linked by transglutaminases by degrading the cross-link between a lysine and a glutamic acid residue. Catalyzes the formation of 5-oxo-L-proline from L-gamma-glutamyl-L-epsilon-lysine. Inactive with L-gamma-glutamyl-alpha-amino acid substrates such as L-gamma-glutamyl-L-alpha-cysteine and L-gamma-glutamyl-L-alpha-alanine. This Mus musculus (Mouse) protein is Gamma-glutamylaminecyclotransferase (Ggact).